The sequence spans 171 residues: Histone H1, gonadal (171 aa).

2 disordered regions span residues 1–40 (AASPQKRAASPRKSPKKSPRKSPKKKSPRKRKARSAAHPP) and 133–171 (AKAKKAKAAARRKAAAAKRKAAAAKRRAAKKARKAKAKP). The span at 9–35 (ASPRKSPKKSPRKSPKKKSPRKRKARS) shows a compositional bias: basic residues. An H15 domain is found at 37-111 (AHPPVIDMIT…GATGRFRVGA (75 aa)).

The protein belongs to the histone H1/H5 family. As to expression, sperm.

The protein localises to the nucleus. Its subcellular location is the chromosome. Functionally, histones H1 are necessary for the condensation of nucleosome chains into higher-order structures. The chain is Histone H1, gonadal from Echinolampas crassa (Sea urchin).